Reading from the N-terminus, the 82-residue chain is Antitoxin MazE8 (82 aa).

In terms of assembly, forms a complex with cognate toxin MazF8.

Antitoxin component of a type II toxin-antitoxin (TA) system. Its cognate toxin is MazF8. The polypeptide is Antitoxin MazE8 (mazE8) (Mycobacterium tuberculosis (strain ATCC 25618 / H37Rv)).